The following is a 504-amino-acid chain: Glycerol kinase (504 aa).

Thr-14 provides a ligand contact to ADP. Thr-14, Thr-15, and Ser-16 together coordinate ATP. Sn-glycerol 3-phosphate is bound at residue Thr-14. Arg-18 serves as a coordination point for ADP. Positions 84, 85, 136, and 246 each coordinate sn-glycerol 3-phosphate. Glycerol-binding residues include Arg-84, Glu-85, Tyr-136, Asp-246, and Gln-247. ADP-binding residues include Thr-268 and Gly-311. Positions 268, 311, 315, and 412 each coordinate ATP. ADP is bound by residues Gly-412 and Asn-416.

The protein belongs to the FGGY kinase family.

It carries out the reaction glycerol + ATP = sn-glycerol 3-phosphate + ADP + H(+). It functions in the pathway polyol metabolism; glycerol degradation via glycerol kinase pathway; sn-glycerol 3-phosphate from glycerol: step 1/1. Inhibited by fructose 1,6-bisphosphate (FBP). Functionally, key enzyme in the regulation of glycerol uptake and metabolism. Catalyzes the phosphorylation of glycerol to yield sn-glycerol 3-phosphate. This is Glycerol kinase from Aliivibrio salmonicida (strain LFI1238) (Vibrio salmonicida (strain LFI1238)).